Consider the following 124-residue polypeptide: Small ribosomal subunit protein uS12 (124 aa).

The residue at position 89 (aspartate 89) is a 3-methylthioaspartic acid. The tract at residues 105 to 124 (QGVKNRGQARSRYGAKKEKK) is disordered. Residues 111-124 (GQARSRYGAKKEKK) are compositionally biased toward basic residues.

It belongs to the universal ribosomal protein uS12 family. As to quaternary structure, part of the 30S ribosomal subunit. Contacts proteins S8 and S17. May interact with IF1 in the 30S initiation complex.

Its function is as follows. With S4 and S5 plays an important role in translational accuracy. Interacts with and stabilizes bases of the 16S rRNA that are involved in tRNA selection in the A site and with the mRNA backbone. Located at the interface of the 30S and 50S subunits, it traverses the body of the 30S subunit contacting proteins on the other side and probably holding the rRNA structure together. The combined cluster of proteins S8, S12 and S17 appears to hold together the shoulder and platform of the 30S subunit. This chain is Small ribosomal subunit protein uS12, found in Micrococcus luteus (Micrococcus lysodeikticus).